We begin with the raw amino-acid sequence, 565 residues long: MDIVALIEKAPEEPGVYIFKNQKHYIYIGKAINIKKRLLQHLKEREQSKKEANIFNHSKELEWIVTRNEYEALLLEMDLIRTHKPKYNVLLKHGSGYPVILLTDDEYPTVKITRDTSEKGEAFGPFLNINKALKIKKLIHATFRLRTCEEMPKRPTPCMDYHLGLCSGPCANLISKEDYAISVKSAKAFLSGNVKDVLPTLYEKIEQYASNLAFEKAAFLRDQVLVLQNIVDGQGVFLYDIEEVDVFYLEGYSLWLFIIRNKRLVAHKEFRLNKELIINYEEMLGTYYMSNIVPKKIVANFELTENFRLFIKSKRKDVAFSNNIPKPLLKIIEKNVVLKPDTKEFESEFYKLFGRKAPKLIECFDISHFQGQYTVGSMVVWEDGSLNKSKYRRYRIKTVDYIDDFASLKEVLSRRAKRIVSKEDQTPDMWLIDGGKGQLSMGIEVKEKFLLNIYICSLAKKEEIIYTEDGLEIPIKNHQALYRVFGLLRDEAHRFAITYNRNLRSKEFIKDTLSKIKGVGKVKKEIIYRHFDSLYDFIKSDDEKLKKLGISKSIKESVKKILGDM.

The 78-residue stretch at 12–89 (EEPGVYIFKN…IRTHKPKYNV (78 aa)) folds into the GIY-YIG domain. One can recognise a UVR domain in the interval 195–230 (KDVLPTLYEKIEQYASNLAFEKAAFLRDQVLVLQNI).

It belongs to the UvrC family. As to quaternary structure, interacts with UvrB in an incision complex.

It localises to the cytoplasm. Its function is as follows. The UvrABC repair system catalyzes the recognition and processing of DNA lesions. UvrC both incises the 5' and 3' sides of the lesion. The N-terminal half is responsible for the 3' incision and the C-terminal half is responsible for the 5' incision. The sequence is that of UvrABC system protein C from Hydrogenobaculum sp. (strain Y04AAS1).